Reading from the N-terminus, the 354-residue chain is Ferrochelatase (354 aa).

His-214 and Glu-295 together coordinate Fe cation.

This sequence belongs to the ferrochelatase family.

It localises to the cytoplasm. It carries out the reaction heme b + 2 H(+) = protoporphyrin IX + Fe(2+). Its pathway is porphyrin-containing compound metabolism; protoheme biosynthesis; protoheme from protoporphyrin-IX: step 1/1. In terms of biological role, catalyzes the ferrous insertion into protoporphyrin IX. The protein is Ferrochelatase of Burkholderia orbicola (strain AU 1054).